Here is a 949-residue protein sequence, read N- to C-terminus: Pyruvate, phosphate dikinase, chloroplastic (949 aa).

The transit peptide at 1 to 74 (MASAFKGILI…VMAPASDPTS (74 aa)) directs the protein to the chloroplast. Thr530 is modified (phosphothreonine; by PDRP1). The Tele-phosphohistidine intermediate role is filled by His532. Positions 638, 695, 824, 845, 846, 847, and 848 each coordinate substrate. Glu824 provides a ligand contact to Mg(2+). Residue Asp848 participates in Mg(2+) binding. Cys910 (proton donor) is an active-site residue.

It belongs to the PEP-utilizing enzyme family. Homodimer. Requires Mg(2+) as cofactor. Post-translationally, phosphorylation of Thr-530 in the dark inactivates the enzyme. Dephosphorylation upon light stimulation reactivates the enzyme.

It localises to the plastid. It is found in the chloroplast. It carries out the reaction pyruvate + phosphate + ATP = phosphoenolpyruvate + AMP + diphosphate + H(+). With respect to regulation, activated by light-induced dephosphorylation. Inhibited by dark-induced phosphorylation. Both reactions are catalyzed by PDRP1. Formation of phosphoenolpyruvate, which is the primary acceptor of CO(2) in C4 and some Crassulacean acid metabolism plants. This Mesembryanthemum crystallinum (Common ice plant) protein is Pyruvate, phosphate dikinase, chloroplastic (PPD).